Reading from the N-terminus, the 184-residue chain is Cytidylate kinase (184 aa).

8–16 is an ATP binding site; it reads GQPGSGKTT.

Belongs to the cytidylate kinase family. Type 2 subfamily.

It localises to the cytoplasm. It catalyses the reaction CMP + ATP = CDP + ADP. The enzyme catalyses dCMP + ATP = dCDP + ADP. The chain is Cytidylate kinase from Pyrobaculum neutrophilum (strain DSM 2338 / JCM 9278 / NBRC 100436 / V24Sta) (Thermoproteus neutrophilus).